The chain runs to 511 residues: U3 snoRNP-associated protein-like YAOH (511 aa).

Over residues 1–18 the composition is skewed to basic residues; the sequence is MAPRPRKRVSRPKPRATS. A disordered region spans residues 1 to 117; the sequence is MAPRPRKRVS…EDEDEGEEAG (117 aa). 2 stretches are compositionally biased toward acidic residues: residues 44 to 53 and 66 to 80; these read EDIESEDSDL and DDGE…EQET. Over residues 81-105 the composition is skewed to basic and acidic residues; it reads AGEKKMRIAKELLKKVTDAARRRRE. WD repeat units lie at residues 158–197, 217–256, 259–298, 301–339, 342–380, 412–451, and 457–497; these read KHRQ…SEKY, KRSK…HIQA, GHRG…YMNC, GHQN…QLLF, PATA…PTHI, SAQS…KGIR, and RLDG…QNGV.

It belongs to the WD repeat RRP9 family.

Its subcellular location is the nucleus. The protein resides in the nucleolus. Component of a nucleolar small nuclear ribonucleoprotein particle (snoRNP) thought to participate in the processing and modification of pre-ribosomal RNA. Essential for embryogenesis. In Oryza sativa subsp. japonica (Rice), this protein is U3 snoRNP-associated protein-like YAOH.